The primary structure comprises 499 residues: 2,3-bisphosphoglycerate-independent phosphoglycerate mutase (499 aa).

Positions 10 and 60 each coordinate Mn(2+). The active-site Phosphoserine intermediate is serine 60. Substrate contacts are provided by residues histidine 121, 151 to 152 (RD), arginine 182, arginine 188, 253 to 256 (RPDR), and lysine 326. Mn(2+)-binding residues include aspartate 391, histidine 395, aspartate 434, histidine 435, and histidine 452.

The protein belongs to the BPG-independent phosphoglycerate mutase family. Monomer. Requires Mn(2+) as cofactor.

It carries out the reaction (2R)-2-phosphoglycerate = (2R)-3-phosphoglycerate. The protein operates within carbohydrate degradation; glycolysis; pyruvate from D-glyceraldehyde 3-phosphate: step 3/5. Catalyzes the interconversion of 2-phosphoglycerate and 3-phosphoglycerate. The sequence is that of 2,3-bisphosphoglycerate-independent phosphoglycerate mutase from Metamycoplasma hominis (strain ATCC 23114 / DSM 25592 / NBRC 14850 / NCTC 10111 / PG21) (Mycoplasma hominis).